The chain runs to 641 residues: Fibrinogen alpha-2 chain (641 aa).

An N-terminal signal peptide occupies residues Met1–Gly23. Positions Ser107–Arg226 form a coiled coil. A disordered region spans residues Asp228 to Lys327. Residue Asn271 is glycosylated (N-linked (GlcNAc...) asparagine). Positions Val279–Val289 are enriched in basic and acidic residues. The span at Ser293–Thr317 shows a compositional bias: low complexity. One can recognise a Fibrinogen C-terminal domain in the interval Arg395–Gln636. N-linked (GlcNAc...) asparagine glycosylation occurs at Asn397. A disulfide bridge links Cys404 with Cys435. Asn458 is a glycosylation site (N-linked (GlcNAc...) asparagine). Cys571 and Cys584 are oxidised to a cystine.

Heterohexamer; disulfide linked. Contains 2 sets of 3 non-identical chains (alpha, beta and gamma). The 2 heterotrimers are in head to head conformation with the N-termini in a small central domain. Conversion of fibrinogen to fibrin is triggered by thrombin, which cleaves fibrinopeptides A and B from alpha and beta chains, and thus exposes the N-terminal polymerization sites responsible for the formation of the soft clot. The soft clot is converted into the hard clot by factor XIIIA which catalyzes the epsilon-(gamma-glutamyl)lysine cross-linking between gamma chains (stronger) and between alpha chains (weaker) of different monomers. In terms of processing, forms F13A-mediated cross-links between a glutamine and the epsilon-amino group of a lysine residue, forming fibronectin-fibrinogen heteropolymers.

Its subcellular location is the secreted. In terms of biological role, fibrinogen has a double function: yielding monomers that polymerize into fibrin and acting as a cofactor in platelet aggregation. The chain is Fibrinogen alpha-2 chain from Petromyzon marinus (Sea lamprey).